The sequence spans 516 residues: uncharacterized protein (516 aa).

2 PFTB repeats span residues 45 to 86 (RQDA…QRAD) and 401 to 443 (DERA…DGSE).

This is an uncharacterized protein from Bradyrhizobium diazoefficiens (strain JCM 10833 / BCRC 13528 / IAM 13628 / NBRC 14792 / USDA 110).